The following is a 314-amino-acid chain: Carbamate kinase (314 aa).

It belongs to the carbamate kinase family. As to quaternary structure, homodimer.

It carries out the reaction hydrogencarbonate + NH4(+) + ATP = carbamoyl phosphate + ADP + H2O + H(+). It participates in metabolic intermediate metabolism; carbamoyl phosphate degradation; CO(2) and NH(3) from carbamoyl phosphate: step 1/1. The protein is Carbamate kinase (CBK) of Trichomonas vaginalis.